We begin with the raw amino-acid sequence, 163 residues long: Urease accessory protein UreE (163 aa).

Belongs to the UreE family.

Its subcellular location is the cytoplasm. Its function is as follows. Involved in urease metallocenter assembly. Binds nickel. Probably functions as a nickel donor during metallocenter assembly. This is Urease accessory protein UreE from Actinomyces naeslundii.